Consider the following 270-residue polypeptide: Proteasome subunit alpha (270 aa).

The interval 229-270 is disordered; the sequence is LLDTEAAGSTPTDAPSDTEDGDSTDGTDRADGTTDSTEETEK. Residues 244 to 253 are compositionally biased toward acidic residues; it reads SDTEDGDSTD.

The protein belongs to the peptidase T1A family. As to quaternary structure, the 20S proteasome core is composed of 14 alpha and 14 beta subunits that assemble into four stacked heptameric rings, resulting in a barrel-shaped structure. The two inner rings, each composed of seven catalytic beta subunits, are sandwiched by two outer rings, each composed of seven alpha subunits. The catalytic chamber with the active sites is on the inside of the barrel. Has a gated structure, the ends of the cylinder being occluded by the N-termini of the alpha-subunits. Is capped by the proteasome-associated ATPase, ARC.

The protein resides in the cytoplasm. It functions in the pathway protein degradation; proteasomal Pup-dependent pathway. Its activity is regulated as follows. The formation of the proteasomal ATPase ARC-20S proteasome complex, likely via the docking of the C-termini of ARC into the intersubunit pockets in the alpha-rings, may trigger opening of the gate for substrate entry. Interconversion between the open-gate and close-gate conformations leads to a dynamic regulation of the 20S proteasome proteolysis activity. Component of the proteasome core, a large protease complex with broad specificity involved in protein degradation. The protein is Proteasome subunit alpha of Streptomyces griseus subsp. griseus (strain JCM 4626 / CBS 651.72 / NBRC 13350 / KCC S-0626 / ISP 5235).